The following is a 207-amino-acid chain: Small ribosomal subunit protein uS4 (207 aa).

The interval 33-54 is disordered; sequence KLDSKPGQHGRTSGARTSDYGN. Residues 42-53 are compositionally biased toward polar residues; the sequence is GRTSGARTSDYG. Positions 97 to 160 constitute an S4 RNA-binding domain; the sequence is SRLDNVVYRM…KKQVRIAEAL (64 aa).

This sequence belongs to the universal ribosomal protein uS4 family. In terms of assembly, part of the 30S ribosomal subunit. Contacts protein S5. The interaction surface between S4 and S5 is involved in control of translational fidelity.

Functionally, one of the primary rRNA binding proteins, it binds directly to 16S rRNA where it nucleates assembly of the body of the 30S subunit. With S5 and S12 plays an important role in translational accuracy. The sequence is that of Small ribosomal subunit protein uS4 from Cupriavidus necator (strain ATCC 17699 / DSM 428 / KCTC 22496 / NCIMB 10442 / H16 / Stanier 337) (Ralstonia eutropha).